Reading from the N-terminus, the 1268-residue chain is Meiosis inhibitor protein 1 (1268 aa).

As to expression, strongly expressed in testis, weakly in brain, and not detected in spleen, liver, kidney, small intestine or colon.

Required for normal meiotic chromosome synapsis. May be involved in the formation of meiotic double-strand breaks (DSBs) in spermatocytes. This is Meiosis inhibitor protein 1 from Mus musculus (Mouse).